The primary structure comprises 230 residues: MQLSTNKPDLQEMFDSLAPKYDRINSILSLGMHHLWNRKFSKMLGKSECLLDLCSGTGKVAYRYIHDYPKSQAILVDFSSNMLAIAKQRYPKAPFTFIEGDIAQLPIDQESHTLAAISYGLRNLPDRKNALNEIHRILKPNGCLGILELTSPSDNHPMYLAHRLYLKFLVPLIGRLCSKNKQAYHYLAESIKNLPKDDYLEQLFKDAQFQISKKRKFAFGAATIWILQKI.

S-adenosyl-L-methionine is bound by residues threonine 57, aspartate 77, 101–102 (DI), and serine 118.

Belongs to the class I-like SAM-binding methyltransferase superfamily. MenG/UbiE family.

It catalyses the reaction a 2-demethylmenaquinol + S-adenosyl-L-methionine = a menaquinol + S-adenosyl-L-homocysteine + H(+). It functions in the pathway quinol/quinone metabolism; menaquinone biosynthesis; menaquinol from 1,4-dihydroxy-2-naphthoate: step 2/2. In terms of biological role, methyltransferase required for the conversion of demethylmenaquinol (DMKH2) to menaquinol (MKH2). The protein is Demethylmenaquinone methyltransferase of Chlamydia caviae (strain ATCC VR-813 / DSM 19441 / 03DC25 / GPIC) (Chlamydophila caviae).